The chain runs to 476 residues: UDP-N-acetylmuramate--L-alanine ligase (476 aa).

Residue 112-118 coordinates ATP; sequence GTHGKTT.

It belongs to the MurCDEF family.

It localises to the cytoplasm. It carries out the reaction UDP-N-acetyl-alpha-D-muramate + L-alanine + ATP = UDP-N-acetyl-alpha-D-muramoyl-L-alanine + ADP + phosphate + H(+). It participates in cell wall biogenesis; peptidoglycan biosynthesis. Cell wall formation. This Magnetococcus marinus (strain ATCC BAA-1437 / JCM 17883 / MC-1) protein is UDP-N-acetylmuramate--L-alanine ligase.